Consider the following 93-residue polypeptide: UPF0521 protein B (93 aa).

Residues 2–58 (SLKEVITSLKNDFHSINKEIDSMKENNEKQEEKIFQEIKKLKLEMELLRKDNLSFKT) are a coiled coil.

Belongs to the UPF0521 family.

The sequence is that of UPF0521 protein B from Dictyostelium discoideum (Social amoeba).